Consider the following 40-residue polypeptide: QGPPISIDLSLELLRKMIEIEKQEKEKQQAANNRLLLDTI.

Q1 is modified (pyrrolidone carboxylic acid). An Isoleucine amide modification is found at I40.

Belongs to the sauvagine/corticotropin-releasing factor/urotensin I family.

It is found in the secreted. Hypotensive and diuretic peptide. The polypeptide is Sauvagin (Phyllomedusa sauvagei (Sauvage's leaf frog)).